We begin with the raw amino-acid sequence, 388 residues long: Succinate--CoA ligase [ADP-forming] subunit beta (388 aa).

In terms of domain architecture, ATP-grasp spans 9–245 (KELLASYGLP…KSQENERELK (237 aa)). Residues Lys46, 53–55 (GRG), Glu100, Tyr103, and Glu108 each bind ATP. Asn200 and Asp214 together coordinate Mg(2+). Substrate is bound by residues Asn265 and 322-324 (GIV).

The protein belongs to the succinate/malate CoA ligase beta subunit family. Heterotetramer of two alpha and two beta subunits. The cofactor is Mg(2+).

It catalyses the reaction succinate + ATP + CoA = succinyl-CoA + ADP + phosphate. It carries out the reaction GTP + succinate + CoA = succinyl-CoA + GDP + phosphate. It participates in carbohydrate metabolism; tricarboxylic acid cycle; succinate from succinyl-CoA (ligase route): step 1/1. Functionally, succinyl-CoA synthetase functions in the citric acid cycle (TCA), coupling the hydrolysis of succinyl-CoA to the synthesis of either ATP or GTP and thus represents the only step of substrate-level phosphorylation in the TCA. The beta subunit provides nucleotide specificity of the enzyme and binds the substrate succinate, while the binding sites for coenzyme A and phosphate are found in the alpha subunit. The protein is Succinate--CoA ligase [ADP-forming] subunit beta of Neisseria meningitidis serogroup A / serotype 4A (strain DSM 15465 / Z2491).